The primary structure comprises 101 residues: MIPGEYQIQDGEIELNAGRRTLTLNVANSGDRPIQVGSHYHFFETNDALVFDRALARGMRLNIPAGTAVRFEPGQSREVELVELAGLRRVYGFAGRVMGEL.

This sequence belongs to the urease beta subunit family. In terms of assembly, heterotrimer of UreA (gamma), UreB (beta) and UreC (alpha) subunits. Three heterotrimers associate to form the active enzyme.

The protein localises to the cytoplasm. The enzyme catalyses urea + 2 H2O + H(+) = hydrogencarbonate + 2 NH4(+). It functions in the pathway nitrogen metabolism; urea degradation; CO(2) and NH(3) from urea (urease route): step 1/1. The chain is Urease subunit beta from Azotobacter vinelandii (strain DJ / ATCC BAA-1303).